We begin with the raw amino-acid sequence, 115 residues long: Large ribosomal subunit protein bL19 (115 aa).

Belongs to the bacterial ribosomal protein bL19 family.

This protein is located at the 30S-50S ribosomal subunit interface and may play a role in the structure and function of the aminoacyl-tRNA binding site. In Finegoldia magna (strain ATCC 29328 / DSM 20472 / WAL 2508) (Peptostreptococcus magnus), this protein is Large ribosomal subunit protein bL19.